A 484-amino-acid chain; its full sequence is Sperm motility kinase Tcr mutant form (484 aa).

Residues 8–256 (YEMLETIGQG…VAEVMVHPWV (249 aa)) enclose the Protein kinase domain. ATP is bound by residues 14-22 (IGQGGCAQV) and Lys37. Asp127 serves as the catalytic Proton acceptor. Disordered regions lie at residues 355–400 (EPTG…TMDQ) and 426–446 (STEG…RGWP). Over residues 391–400 (PINTTPTMDQ) the composition is skewed to polar residues.

This sequence belongs to the protein kinase superfamily. Tyr protein kinase family. Smok subfamily. As to expression, testis-specific. Expressed in the testis from 22 days postpartum (22 dpp). Expressed late in spermiogenesis, only in Tcr-containing t-haplotypes.

The enzyme catalyses L-seryl-[protein] + ATP = O-phospho-L-seryl-[protein] + ADP + H(+). It carries out the reaction L-threonyl-[protein] + ATP = O-phospho-L-threonyl-[protein] + ADP + H(+). Its function is as follows. While the main function of Smoks is to control sperm motility, the role of Smok-Tcr, with reduced kinase activity, is to counterbalance a signaling impairment caused by the distorter/sterility loci, giving t-sperm an advantage in reaching the oocytes. Transmission ratio distortion also called segregation distortion is the name given to the phenomenon above-mentioned. Being associated with the T-complex, it allows males heterozygous for a complete t-haplotype to preferentially transmit the t-haplotype chromosome. This is Sperm motility kinase Tcr mutant form (Smoktcr) from Mus musculus (Mouse).